A 178-amino-acid chain; its full sequence is ATP synthase subunit b (178 aa).

A helical transmembrane segment spans residues 30-50 (FFFVLAIFLIVLAVIGTFVVP).

It belongs to the ATPase B chain family. In terms of assembly, F-type ATPases have 2 components, F(1) - the catalytic core - and F(0) - the membrane proton channel. F(1) has five subunits: alpha(3), beta(3), gamma(1), delta(1), epsilon(1). F(0) has three main subunits: a(1), b(2) and c(10-14). The alpha and beta chains form an alternating ring which encloses part of the gamma chain. F(1) is attached to F(0) by a central stalk formed by the gamma and epsilon chains, while a peripheral stalk is formed by the delta and b chains.

It localises to the cell membrane. Its function is as follows. F(1)F(0) ATP synthase produces ATP from ADP in the presence of a proton or sodium gradient. F-type ATPases consist of two structural domains, F(1) containing the extramembraneous catalytic core and F(0) containing the membrane proton channel, linked together by a central stalk and a peripheral stalk. During catalysis, ATP synthesis in the catalytic domain of F(1) is coupled via a rotary mechanism of the central stalk subunits to proton translocation. Functionally, component of the F(0) channel, it forms part of the peripheral stalk, linking F(1) to F(0). The sequence is that of ATP synthase subunit b from Mycobacterium avium (strain 104).